Consider the following 371-residue polypeptide: 4-hydroxy-3-methylbut-2-en-1-yl diphosphate synthase (flavodoxin) (371 aa).

[4Fe-4S] cluster contacts are provided by cysteine 269, cysteine 272, cysteine 304, and glutamate 311.

It belongs to the IspG family. [4Fe-4S] cluster is required as a cofactor.

It catalyses the reaction (2E)-4-hydroxy-3-methylbut-2-enyl diphosphate + oxidized [flavodoxin] + H2O + 2 H(+) = 2-C-methyl-D-erythritol 2,4-cyclic diphosphate + reduced [flavodoxin]. Its pathway is isoprenoid biosynthesis; isopentenyl diphosphate biosynthesis via DXP pathway; isopentenyl diphosphate from 1-deoxy-D-xylulose 5-phosphate: step 5/6. In terms of biological role, converts 2C-methyl-D-erythritol 2,4-cyclodiphosphate (ME-2,4cPP) into 1-hydroxy-2-methyl-2-(E)-butenyl 4-diphosphate. In Acinetobacter baylyi (strain ATCC 33305 / BD413 / ADP1), this protein is 4-hydroxy-3-methylbut-2-en-1-yl diphosphate synthase (flavodoxin).